Reading from the N-terminus, the 443-residue chain is ATP-dependent protease ATPase subunit HslU (443 aa).

ATP contacts are provided by residues Ile-20, 62–67 (GVGKTE), Asp-255, Glu-321, and Arg-393.

It belongs to the ClpX chaperone family. HslU subfamily. A double ring-shaped homohexamer of HslV is capped on each side by a ring-shaped HslU homohexamer. The assembly of the HslU/HslV complex is dependent on binding of ATP.

It localises to the cytoplasm. ATPase subunit of a proteasome-like degradation complex; this subunit has chaperone activity. The binding of ATP and its subsequent hydrolysis by HslU are essential for unfolding of protein substrates subsequently hydrolyzed by HslV. HslU recognizes the N-terminal part of its protein substrates and unfolds these before they are guided to HslV for hydrolysis. The chain is ATP-dependent protease ATPase subunit HslU from Helicobacter pylori (strain Shi470).